The primary structure comprises 605 residues: Adenine deaminase (605 aa).

The protein belongs to the metallo-dependent hydrolases superfamily. Adenine deaminase family. The cofactor is Mn(2+).

It catalyses the reaction adenine + H2O + H(+) = hypoxanthine + NH4(+). The polypeptide is Adenine deaminase (Staphylothermus marinus (strain ATCC 43588 / DSM 3639 / JCM 9404 / F1)).